A 232-amino-acid chain; its full sequence is Ubiquinone biosynthesis O-methyltransferase (232 aa).

Residues R36, G55, D76, and M120 each coordinate S-adenosyl-L-methionine.

This sequence belongs to the methyltransferase superfamily. UbiG/COQ3 family.

It carries out the reaction a 3-demethylubiquinol + S-adenosyl-L-methionine = a ubiquinol + S-adenosyl-L-homocysteine + H(+). The catalysed reaction is a 3-(all-trans-polyprenyl)benzene-1,2-diol + S-adenosyl-L-methionine = a 2-methoxy-6-(all-trans-polyprenyl)phenol + S-adenosyl-L-homocysteine + H(+). It participates in cofactor biosynthesis; ubiquinone biosynthesis. Functionally, O-methyltransferase that catalyzes the 2 O-methylation steps in the ubiquinone biosynthetic pathway. The sequence is that of Ubiquinone biosynthesis O-methyltransferase from Paraburkholderia xenovorans (strain LB400).